Reading from the N-terminus, the 468-residue chain is Probable cytosol aminopeptidase (468 aa).

Mn(2+) is bound by residues lysine 242 and aspartate 247. Residue lysine 254 is part of the active site. Mn(2+)-binding residues include aspartate 265, aspartate 324, and glutamate 326. Arginine 328 is an active-site residue.

It belongs to the peptidase M17 family. Mn(2+) serves as cofactor.

Its subcellular location is the cytoplasm. It carries out the reaction Release of an N-terminal amino acid, Xaa-|-Yaa-, in which Xaa is preferably Leu, but may be other amino acids including Pro although not Arg or Lys, and Yaa may be Pro. Amino acid amides and methyl esters are also readily hydrolyzed, but rates on arylamides are exceedingly low.. It catalyses the reaction Release of an N-terminal amino acid, preferentially leucine, but not glutamic or aspartic acids.. In terms of biological role, presumably involved in the processing and regular turnover of intracellular proteins. Catalyzes the removal of unsubstituted N-terminal amino acids from various peptides. The protein is Probable cytosol aminopeptidase of Neisseria meningitidis serogroup A / serotype 4A (strain DSM 15465 / Z2491).